A 647-amino-acid polypeptide reads, in one-letter code: Chaperone protein HtpG (647 aa).

Residues Met-1 to Arg-353 form an a; substrate-binding region. A b region spans residues Glu-354–Arg-567. The tract at residues Ile-568–Leu-647 is c.

It belongs to the heat shock protein 90 family. As to quaternary structure, homodimer.

The protein localises to the cytoplasm. In terms of biological role, molecular chaperone. Has ATPase activity. The protein is Chaperone protein HtpG of Mycobacterium bovis (strain ATCC BAA-935 / AF2122/97).